The following is a 305-amino-acid chain: Oxygen-dependent coproporphyrinogen-III oxidase (305 aa).

Position 92 (S92) interacts with substrate. A divalent metal cation-binding residues include H96 and H106. Residue H106 is the Proton donor of the active site. 108–110 (NVR) provides a ligand contact to substrate. Positions 145 and 175 each coordinate a divalent metal cation. The tract at residues 239-274 (YVEFNLLFDRGTLFGLQSGGRAESILISLPPLVRWE) is important for dimerization. 257–259 (GGR) lines the substrate pocket.

This sequence belongs to the aerobic coproporphyrinogen-III oxidase family. In terms of assembly, homodimer. A divalent metal cation serves as cofactor.

Its subcellular location is the cytoplasm. It carries out the reaction coproporphyrinogen III + O2 + 2 H(+) = protoporphyrinogen IX + 2 CO2 + 2 H2O. The protein operates within porphyrin-containing compound metabolism; protoporphyrin-IX biosynthesis; protoporphyrinogen-IX from coproporphyrinogen-III (O2 route): step 1/1. Its function is as follows. Involved in the heme biosynthesis. Catalyzes the aerobic oxidative decarboxylation of propionate groups of rings A and B of coproporphyrinogen-III to yield the vinyl groups in protoporphyrinogen-IX. The sequence is that of Oxygen-dependent coproporphyrinogen-III oxidase from Xylella fastidiosa (strain Temecula1 / ATCC 700964).